Consider the following 411-residue polypeptide: Lissencephaly-1 homolog (411 aa).

One can recognise a LisH domain in the interval 7–39 (QREELNKAIADYLASNGFMEALESFKKETDMPG). Residues 54–80 (TSVIRLQKKVMDLEGRLAEAEKEYISG) are a coiled coil. Residues 77 to 89 (YISGTPSREKRSP) are compositionally biased toward basic and acidic residues. The tract at residues 77–96 (YISGTPSREKRSPTEWIPRP) is disordered. WD repeat units lie at residues 104–145 (GHRA…RTIK), 146–187 (GHTD…RTMH), 188–227 (GHDH…CVRT), 230–269 (GHRD…CKLE), 272–334 (EHDH…ALFT), 337–376 (GHDN…CCKT), and 379–411 (AHSH…WECR).

This sequence belongs to the WD repeat LIS1/nudF family.

Its subcellular location is the cytoplasm. The protein localises to the cytoskeleton. It localises to the microtubule organizing center. The protein resides in the centrosome. Its function is as follows. Positively regulates the activity of the minus-end directed microtubule motor protein dynein. May enhance dynein-mediated microtubule sliding by targeting dynein to the microtubule plus end. Required for several dynein- and microtubule-dependent processes. The sequence is that of Lissencephaly-1 homolog from Ixodes scapularis (Black-legged tick).